Consider the following 428-residue polypeptide: UPF0229 protein YeaH (428 aa).

The span at 78–90 (GNDHFIQNDRIER) shows a compositional bias: basic and acidic residues. Positions 78-111 (GNDHFIQNDRIERPQGGGGGGSGSGQGQASQDGE) are disordered. Positions 92–103 (QGGGGGGSGSGQ) are enriched in gly residues.

This sequence belongs to the UPF0229 family.

This Salmonella paratyphi C (strain RKS4594) protein is UPF0229 protein YeaH.